Consider the following 110-residue polypeptide: Nucleoid-associated protein SYO3AOP1_1366 (110 aa).

Belongs to the YbaB/EbfC family. Homodimer.

It localises to the cytoplasm. The protein localises to the nucleoid. Functionally, binds to DNA and alters its conformation. May be involved in regulation of gene expression, nucleoid organization and DNA protection. The polypeptide is Nucleoid-associated protein SYO3AOP1_1366 (Sulfurihydrogenibium sp. (strain YO3AOP1)).